Here is a 427-residue protein sequence, read N- to C-terminus: Serine hydroxymethyltransferase (427 aa).

(6S)-5,6,7,8-tetrahydrofolate-binding positions include leucine 127 and glycine 131 to leucine 133. An N6-(pyridoxal phosphate)lysine modification is found at lysine 236.

Belongs to the SHMT family. As to quaternary structure, homodimer. Pyridoxal 5'-phosphate is required as a cofactor.

The protein resides in the cytoplasm. It carries out the reaction (6R)-5,10-methylene-5,6,7,8-tetrahydrofolate + glycine + H2O = (6S)-5,6,7,8-tetrahydrofolate + L-serine. The protein operates within one-carbon metabolism; tetrahydrofolate interconversion. It functions in the pathway amino-acid biosynthesis; glycine biosynthesis; glycine from L-serine: step 1/1. In terms of biological role, catalyzes the reversible interconversion of serine and glycine with tetrahydrofolate (THF) serving as the one-carbon carrier. This reaction serves as the major source of one-carbon groups required for the biosynthesis of purines, thymidylate, methionine, and other important biomolecules. Also exhibits THF-independent aldolase activity toward beta-hydroxyamino acids, producing glycine and aldehydes, via a retro-aldol mechanism. This Paramagnetospirillum magneticum (strain ATCC 700264 / AMB-1) (Magnetospirillum magneticum) protein is Serine hydroxymethyltransferase.